The primary structure comprises 188 residues: Elongation factor P (188 aa).

The protein belongs to the elongation factor P family.

Its subcellular location is the cytoplasm. The protein operates within protein biosynthesis; polypeptide chain elongation. Functionally, involved in peptide bond synthesis. Stimulates efficient translation and peptide-bond synthesis on native or reconstituted 70S ribosomes in vitro. Probably functions indirectly by altering the affinity of the ribosome for aminoacyl-tRNA, thus increasing their reactivity as acceptors for peptidyl transferase. The chain is Elongation factor P from Exiguobacterium sibiricum (strain DSM 17290 / CCUG 55495 / CIP 109462 / JCM 13490 / 255-15).